A 503-amino-acid polypeptide reads, in one-letter code: Aspartyl/glutamyl-tRNA(Asn/Gln) amidotransferase subunit B (503 aa).

This sequence belongs to the GatB/GatE family. GatB subfamily. Heterotrimer of A, B and C subunits.

It carries out the reaction L-glutamyl-tRNA(Gln) + L-glutamine + ATP + H2O = L-glutaminyl-tRNA(Gln) + L-glutamate + ADP + phosphate + H(+). The catalysed reaction is L-aspartyl-tRNA(Asn) + L-glutamine + ATP + H2O = L-asparaginyl-tRNA(Asn) + L-glutamate + ADP + phosphate + 2 H(+). Allows the formation of correctly charged Asn-tRNA(Asn) or Gln-tRNA(Gln) through the transamidation of misacylated Asp-tRNA(Asn) or Glu-tRNA(Gln) in organisms which lack either or both of asparaginyl-tRNA or glutaminyl-tRNA synthetases. The reaction takes place in the presence of glutamine and ATP through an activated phospho-Asp-tRNA(Asn) or phospho-Glu-tRNA(Gln). The protein is Aspartyl/glutamyl-tRNA(Asn/Gln) amidotransferase subunit B of Mycolicibacterium smegmatis (strain ATCC 700084 / mc(2)155) (Mycobacterium smegmatis).